We begin with the raw amino-acid sequence, 458 residues long: ATP synthase subunit beta (458 aa).

148–155 (GGAGVGKT) is a binding site for ATP.

Belongs to the ATPase alpha/beta chains family. In terms of assembly, F-type ATPases have 2 components, CF(1) - the catalytic core - and CF(0) - the membrane proton channel. CF(1) has five subunits: alpha(3), beta(3), gamma(1), delta(1), epsilon(1). CF(0) has three main subunits: a(1), b(2) and c(9-12). The alpha and beta chains form an alternating ring which encloses part of the gamma chain. CF(1) is attached to CF(0) by a central stalk formed by the gamma and epsilon chains, while a peripheral stalk is formed by the delta and b chains.

It localises to the cell inner membrane. The catalysed reaction is ATP + H2O + 4 H(+)(in) = ADP + phosphate + 5 H(+)(out). Produces ATP from ADP in the presence of a proton gradient across the membrane. The catalytic sites are hosted primarily by the beta subunits. The protein is ATP synthase subunit beta of Pseudomonas fluorescens (strain ATCC BAA-477 / NRRL B-23932 / Pf-5).